A 289-amino-acid chain; its full sequence is MRTGPGWLLAAAALPFFACAQEATIDKVHDTPAVRGSIIANMLQEHDNPFTLYPYESNYLLYTYTSDLNKKAIESYNWSDNANKDEVKFQLSLAFPLWRGILGDNSLLGASYTQRSWWQLSNTGESAPFRETNYEPQLFLGFATDYSVGDWTLRDAEFGYNHQSNGRSDPTSRSWNRLYSRLMAQNGNWLVEVKPWYVIGDTSDNKNITKYMGYYQLKIGYQLGEAVLSAKGQYNWNTGYGGAELGVSYPITKHVRFYTQVYSGYGESLIDYDFNQTRVGMGVMLNDLF.

The N-terminal stretch at 1–20 (MRTGPGWLLAAAALPFFACA) is a signal peptide. The Periplasmic segment spans residues 21-52 (QEATIDKVHDTPAVRGSIIANMLQEHDNPFTL). Residues 53-65 (YPYESNYLLYTYT) form a beta stranded membrane-spanning segment. The Extracellular segment spans residues 66-84 (SDLNKKAIESYNWSDNANK). Residues 85–99 (DEVKFQLSLAFPLWR) traverse the membrane as a beta stranded segment. The Periplasmic segment spans residues 100–105 (GILGDN). The chain crosses the membrane as a beta stranded span at residues 106–118 (SLLGASYTQRSWW). The Extracellular segment spans residues 119–128 (QLSNTGESAP). Ser-126 provides a ligand contact to Ca(2+). The chain crosses the membrane as a beta stranded span at residues 129-148 (FRETNYEPQLFLGFATDYSV). At 149–150 (GD) the chain is on the periplasmic side. The chain crosses the membrane as a beta stranded span at residues 151–164 (WTLRDAEFGYNHQS). His-162 (proton acceptor) is an active-site residue. Catalysis depends on Ser-164, which acts as the Nucleophile. Residues 165 to 173 (NGRSDPTSR) lie on the Extracellular side of the membrane. The Ca(2+) site is built by Arg-167 and Ser-172. The chain crosses the membrane as a beta stranded span at residues 174–186 (SWNRLYSRLMAQN). The Periplasmic segment spans residues 187 to 188 (GN). The chain crosses the membrane as a beta stranded span at residues 189–198 (WLVEVKPWYV). The Extracellular segment spans residues 199–216 (IGDTSDNKNITKYMGYYQ). Asp-204 is a Ca(2+) binding site. The chain crosses the membrane as a beta stranded span at residues 217-223 (LKIGYQL). Residues 224–225 (GE) lie on the Periplasmic side of the membrane. A beta stranded transmembrane segment spans residues 226–234 (AVLSAKGQY). Over 235 to 241 (NWNTGYG) the chain is Extracellular. The chain crosses the membrane as a beta stranded span at residues 242–250 (GAELGVSYP). Residues 251–255 (ITKHV) lie on the Periplasmic side of the membrane. Residues 256 to 265 (RFYTQVYSGY) traverse the membrane as a beta stranded segment. At 266 to 274 (GESLIDYDF) the chain is on the extracellular side. Residues 275–286 (NQTRVGMGVMLN) traverse the membrane as a beta stranded segment. The Periplasmic portion of the chain corresponds to 287 to 289 (DLF).

It belongs to the phospholipase A1 family. As to quaternary structure, homodimer; dimerization is reversible, and the dimeric form is the active one. The cofactor is Ca(2+).

The protein resides in the cell outer membrane. It carries out the reaction a 1,2-diacyl-sn-glycero-3-phosphocholine + H2O = a 2-acyl-sn-glycero-3-phosphocholine + a fatty acid + H(+). It catalyses the reaction a 1,2-diacyl-sn-glycero-3-phosphocholine + H2O = a 1-acyl-sn-glycero-3-phosphocholine + a fatty acid + H(+). Its function is as follows. Hydrolysis of phosphatidylcholine with phospholipase A2 (EC 3.1.1.4) and phospholipase A1 (EC 3.1.1.32) activities. The chain is Phospholipase A1 (pldA) from Proteus vulgaris.